Consider the following 433-residue polypeptide: GTPase Obg (433 aa).

In terms of domain architecture, Obg spans 1–159 (MGLTDYCECR…LHVSLEIKYL (159 aa)). The 170-residue stretch at 160–329 (ANVGIVGFPN…LVAQVFALHQ (170 aa)) folds into the OBG-type G domain. Residues 166 to 173 (GFPNTGKS), 191 to 195 (FTTLV), 212 to 215 (DIPG), 282 to 285 (NKTD), and 310 to 312 (ISA) each bind GTP. Residues S173 and T193 each coordinate Mg(2+). In terms of domain architecture, OCT spans 355–433 (ASETDHDPLN…FAGQEFVIND (79 aa)).

The protein belongs to the TRAFAC class OBG-HflX-like GTPase superfamily. OBG GTPase family. As to quaternary structure, monomer. Mg(2+) is required as a cofactor.

The protein resides in the cytoplasm. Functionally, an essential GTPase which binds GTP, GDP and possibly (p)ppGpp with moderate affinity, with high nucleotide exchange rates and a fairly low GTP hydrolysis rate. Plays a role in control of the cell cycle, stress response, ribosome biogenesis and in those bacteria that undergo differentiation, in morphogenesis control. The sequence is that of GTPase Obg from Mycoplasma pneumoniae (strain ATCC 29342 / M129 / Subtype 1) (Mycoplasmoides pneumoniae).